A 562-amino-acid polypeptide reads, in one-letter code: Serine palmitoyltransferase 2 (562 aa).

A helical membrane pass occupies residues 61–81 (LITYLNYLILIILGHIHDFLG). Residue Lys-365 is modified to N6-(pyridoxal phosphate)lysine.

The protein belongs to the class-II pyridoxal-phosphate-dependent aminotransferase family. The cofactor is pyridoxal 5'-phosphate.

It localises to the membrane. The enzyme catalyses L-serine + hexadecanoyl-CoA + H(+) = 3-oxosphinganine + CO2 + CoA. It functions in the pathway lipid metabolism; sphingolipid metabolism. The chain is Serine palmitoyltransferase 2 (LCB2) from Kluyveromyces lactis (strain ATCC 8585 / CBS 2359 / DSM 70799 / NBRC 1267 / NRRL Y-1140 / WM37) (Yeast).